The primary structure comprises 57 residues: Ribosome modulation factor 2 (57 aa).

The disordered stretch occupies residues 1-24 (MKRQKRDKLGRAHSNGYQAGLGGK).

This sequence belongs to the ribosome modulation factor family.

It localises to the cytoplasm. In terms of biological role, during stationary phase, converts 70S ribosomes to an inactive dimeric form (100S ribosomes). This is Ribosome modulation factor 2 from Colwellia psychrerythraea (strain 34H / ATCC BAA-681) (Vibrio psychroerythus).